The primary structure comprises 267 residues: 5'-nucleotidase SurE (267 aa).

The a divalent metal cation site is built by D14, D15, S45, and N100.

Belongs to the SurE nucleotidase family. The cofactor is a divalent metal cation.

Its subcellular location is the cytoplasm. It catalyses the reaction a ribonucleoside 5'-phosphate + H2O = a ribonucleoside + phosphate. In terms of biological role, nucleotidase that shows phosphatase activity on nucleoside 5'-monophosphates. The polypeptide is 5'-nucleotidase SurE (Methanosarcina acetivorans (strain ATCC 35395 / DSM 2834 / JCM 12185 / C2A)).